The primary structure comprises 86 residues: Large ribosomal subunit protein uL10 (86 aa).

This sequence belongs to the universal ribosomal protein uL10 family. Part of the ribosomal stalk of the 50S ribosomal subunit. The N-terminus interacts with L11 and the large rRNA to form the base of the stalk. The C-terminus forms an elongated spine to which L12 dimers bind in a sequential fashion forming a multimeric L10(L12)X complex.

Its function is as follows. Forms part of the ribosomal stalk, playing a central role in the interaction of the ribosome with GTP-bound translation factors. The polypeptide is Large ribosomal subunit protein uL10 (rplJ) (Serratia marcescens).